The primary structure comprises 143 residues: MSEGFDGTENGGGGGGGGVGKEQDRFLPIANIGRIMRRAVPENGKIAKDSKESVQECVSEFISFITSEASDKCLKEKRKTINGDDLIWSMGTLGFEDYVEPLKLYLRLYRETEGDTKGSRASELPVKKDVVLNGDPGSSFEGM.

The interval 1-23 is disordered; sequence MSEGFDGTENGGGGGGGGVGKEQ. Residues 9 to 20 show a composition bias toward gly residues; the sequence is ENGGGGGGGGVG. The DNA-binding element occupies 27–33; the sequence is LPIANIG. Positions 54–65 are subunit association domain (SAD); sequence VQECVSEFISFI. Residues 117–130 show a composition bias toward basic and acidic residues; sequence KGSRASELPVKKDV. A disordered region spans residues 117 to 143; sequence KGSRASELPVKKDVVLNGDPGSSFEGM.

This sequence belongs to the NFYB/HAP3 subunit family. As to quaternary structure, heterotrimeric transcription factor composed of three components, NF-YA, NF-YB and NF-YC. NF-YB and NF-YC must interact and dimerize for NF-YA association and DNA binding. Ubiquitous.

Its subcellular location is the nucleus. Component of the NF-Y/HAP transcription factor complex. The NF-Y complex stimulates the transcription of various genes by recognizing and binding to a CCAAT motif in promoters. May regulate the expression of photosynthetic genes, and may be involved in chloroplast and amyloplast development. In Oryza sativa subsp. japonica (Rice), this protein is Nuclear transcription factor Y subunit B-4 (NFYB4).